Reading from the N-terminus, the 469-residue chain is Ribulose bisphosphate carboxylase large chain (469 aa).

Positions 1–2 are excised as a propeptide; the sequence is MS. At Pro-3 the chain carries N-acetylproline. Lys-14 is subject to N6,N6,N6-trimethyllysine. Positions 123 and 173 each coordinate substrate. The active-site Proton acceptor is the Lys-175. Residue Lys-177 coordinates substrate. Positions 201, 203, and 204 each coordinate Mg(2+). Lys-201 carries the post-translational modification N6-carboxylysine. Residue His-294 is the Proton acceptor of the active site. Residues Arg-295, His-327, and Ser-379 each contribute to the substrate site.

Belongs to the RuBisCO large chain family. Type I subfamily. In terms of assembly, heterohexadecamer of 8 large chains and 8 small chains; disulfide-linked. The disulfide link is formed within the large subunit homodimers. Mg(2+) serves as cofactor. The disulfide bond which can form in the large chain dimeric partners within the hexadecamer appears to be associated with oxidative stress and protein turnover.

The protein resides in the plastid. The protein localises to the chloroplast. The catalysed reaction is 2 (2R)-3-phosphoglycerate + 2 H(+) = D-ribulose 1,5-bisphosphate + CO2 + H2O. The enzyme catalyses D-ribulose 1,5-bisphosphate + O2 = 2-phosphoglycolate + (2R)-3-phosphoglycerate + 2 H(+). Functionally, ruBisCO catalyzes two reactions: the carboxylation of D-ribulose 1,5-bisphosphate, the primary event in carbon dioxide fixation, as well as the oxidative fragmentation of the pentose substrate in the photorespiration process. Both reactions occur simultaneously and in competition at the same active site. This is Ribulose bisphosphate carboxylase large chain from Iris ensata (Japanese iris).